Here is a 252-residue protein sequence, read N- to C-terminus: Glucosamine-6-phosphate deaminase (252 aa).

Asp64 serves as the catalytic Proton acceptor; for enolization step. Residue Asn130 is the For ring-opening step of the active site. The active-site Proton acceptor; for ring-opening step is the His132. Glu137 (for ring-opening step) is an active-site residue.

It belongs to the glucosamine/galactosamine-6-phosphate isomerase family. NagB subfamily.

It carries out the reaction alpha-D-glucosamine 6-phosphate + H2O = beta-D-fructose 6-phosphate + NH4(+). Its pathway is amino-sugar metabolism; N-acetylneuraminate degradation; D-fructose 6-phosphate from N-acetylneuraminate: step 5/5. Catalyzes the reversible isomerization-deamination of glucosamine 6-phosphate (GlcN6P) to form fructose 6-phosphate (Fru6P) and ammonium ion. This chain is Glucosamine-6-phosphate deaminase, found in Exiguobacterium sibiricum (strain DSM 17290 / CCUG 55495 / CIP 109462 / JCM 13490 / 255-15).